The chain runs to 298 residues: uncharacterized protein (298 aa).

8 helical membrane-spanning segments follow: residues 5–25 (SLATLFALLILATLINRFLLW), 52–72 (VISGPRWMTLTFFALISFLAL), 105–125 (LFLLFIPLAGFLILATGQVLV), 138–158 (IFWGWIMTVFALSHAAWLLML), 163–183 (IQGGALLVLFLLALTESNDIA), 208–228 (GLMGGVITIMIASLIIGPLLT), 236–256 (LLAGLLIGISGFCGDVVMSAI), and 273–293 (GGLLDRIDSLIFTAPVFFYFI).

It belongs to the CDS family.

It is found in the cell membrane. This is an uncharacterized protein from Escherichia coli (strain K12).